The following is a 298-amino-acid chain: Ribosomal protein L11 methyltransferase (298 aa).

Residues Thr152, Gly176, Asp198, and Asn236 each coordinate S-adenosyl-L-methionine.

It belongs to the methyltransferase superfamily. PrmA family.

The protein localises to the cytoplasm. The catalysed reaction is L-lysyl-[protein] + 3 S-adenosyl-L-methionine = N(6),N(6),N(6)-trimethyl-L-lysyl-[protein] + 3 S-adenosyl-L-homocysteine + 3 H(+). Functionally, methylates ribosomal protein L11. The protein is Ribosomal protein L11 methyltransferase of Polaromonas sp. (strain JS666 / ATCC BAA-500).